The sequence spans 270 residues: Interleukin-1 alpha (270 aa).

The propeptide occupies methionine 1–arginine 112. Residue lysine 82 is modified to N6-acetyllysine. The segment at lysine 82 to leucine 86 is nuclear localization signal (NLS). A Phosphoserine modification is found at serine 87. N-linked (GlcNAc...) asparagine glycosylation is present at asparagine 139.

Belongs to the IL-1 family. Monomer. Interacts with TMED10; the interaction mediates the translocation from the cytoplasm into the ERGIC (endoplasmic reticulum-Golgi intermediate compartment) and thereby secretion. Interacts with IL1R1. Interacts with S100A13; this interaction is the first step in the export of IL1A, followed by direct translocation of this complex across the plasma membrane. Post-translationally, acetylated within its nuclear localization sequence, which impacts subcellular localization. In terms of processing, proteolytic processed by CAPN1 in a calcium-dependent manner. Cleavage from 31 kDa precursor to 18 kDa biologically active molecules. Phosphorylated. Phosphorylation greatly enhances susceptibility to digestion and promotes the conversion of pre-IL1A alpha to the biologically active IL1A.

Its subcellular location is the nucleus. It localises to the cytoplasm. It is found in the secreted. Cytokine constitutively present intracellularly in nearly all resting non-hematopoietic cells that plays an important role in inflammation and bridges the innate and adaptive immune systems. After binding to its receptor IL1R1 together with its accessory protein IL1RAP, forms the high affinity interleukin-1 receptor complex. Signaling involves the recruitment of adapter molecules such as MYD88, IRAK1 or IRAK4. In turn, mediates the activation of NF-kappa-B and the three MAPK pathways p38, p42/p44 and JNK pathways. Within the cell, acts as an alarmin and cell death results in its liberation in the extracellular space after disruption of the cell membrane to induce inflammation and alert the host to injury or damage. In addition to its role as a danger signal, which occurs when the cytokine is passively released by cell necrosis, directly senses DNA damage and acts as signal for genotoxic stress without loss of cell integrity. This chain is Interleukin-1 alpha (IL1A), found in Felis catus (Cat).